The sequence spans 113 residues: rRNA-processing protein cgrA (113 aa).

The segment covering 1–15 (MSTITTSSVASSNGM) has biased composition (polar residues). Positions 1-113 (MSTITTSSVA…REKRNKLLHS (113 aa)) are disordered. A coiled-coil region spans residues 37–100 (SYEKRLEARK…EKMHRKRVER (64 aa)). The span at 38-92 (YEKRLEARKLQEAVKEHEREMREEREAERKAQIQKIKDRRAAKEEKERYEKMAEK) shows a compositional bias: basic and acidic residues. Residues 93–113 (MHRKRVERLKRREKRNKLLHS) are compositionally biased toward basic residues.

Belongs to the CGR1 family.

The protein resides in the nucleus. Its subcellular location is the nucleolus. Its function is as follows. Involved in nucleolar integrity and required for processing of the pre-rRNA for the 60S ribosome subunit. This is rRNA-processing protein cgrA (cgrA) from Aspergillus clavatus (strain ATCC 1007 / CBS 513.65 / DSM 816 / NCTC 3887 / NRRL 1 / QM 1276 / 107).